A 358-amino-acid polypeptide reads, in one-letter code: Aromatic amino acid aminotransferase (358 aa).

Lysine 219 is modified (N6-(pyridoxal phosphate)lysine).

This sequence belongs to the class-II pyridoxal-phosphate-dependent aminotransferase family. In terms of assembly, homodimer. Pyridoxal 5'-phosphate serves as cofactor.

The enzyme catalyses an aromatic L-alpha-amino acid + 2-oxoglutarate = an aromatic oxo-acid + L-glutamate. In terms of biological role, aminotransferase that catalyzes the conversion of aromatic amino acids and 2-oxoglutarate into corresponding aromatic oxo acids and L-glutamate. The sequence is that of Aromatic amino acid aminotransferase from Nocardia farcinica (strain IFM 10152).